Here is a 262-residue protein sequence, read N- to C-terminus: Acetylglutamate kinase (262 aa).

Substrate is bound by residues 46 to 47 (GG), Arg68, and Asn160.

This sequence belongs to the acetylglutamate kinase family. ArgB subfamily.

Its subcellular location is the cytoplasm. It carries out the reaction N-acetyl-L-glutamate + ATP = N-acetyl-L-glutamyl 5-phosphate + ADP. The protein operates within amino-acid biosynthesis; L-arginine biosynthesis; N(2)-acetyl-L-ornithine from L-glutamate: step 2/4. Its function is as follows. Catalyzes the ATP-dependent phosphorylation of N-acetyl-L-glutamate. This Shewanella amazonensis (strain ATCC BAA-1098 / SB2B) protein is Acetylglutamate kinase.